Consider the following 307-residue polypeptide: Transcription initiation factor IIB (307 aa).

The TFIIB-type zinc finger occupies 11 to 42 (FTEECPACGSAEIVFDEERGEYVCANCGLVTE). Cys-15, Cys-18, Cys-34, and Cys-37 together coordinate Zn(2+). The interval 48 to 69 (PGPEWRHFNPDQRQRRSRTGEP) is disordered. Residues 50–69 (PEWRHFNPDQRQRRSRTGEP) show a composition bias toward basic and acidic residues. 2 tandem repeats follow at residues 123–207 (LELE…QRRL) and 218–299 (DHLP…EICE).

It belongs to the TFIIB family.

Its function is as follows. Stabilizes TBP binding to an archaeal box-A promoter. Also responsible for recruiting RNA polymerase II to the pre-initiation complex (DNA-TBP-TFIIB). The protein is Transcription initiation factor IIB of Methanopyrus kandleri (strain AV19 / DSM 6324 / JCM 9639 / NBRC 100938).